The chain runs to 492 residues: Glutamyl-tRNA(Gln) amidotransferase subunit A (492 aa).

Active-site charge relay system residues include lysine 79 and serine 154. Catalysis depends on serine 178, which acts as the Acyl-ester intermediate.

Belongs to the amidase family. GatA subfamily. In terms of assembly, heterotrimer of A, B and C subunits.

The enzyme catalyses L-glutamyl-tRNA(Gln) + L-glutamine + ATP + H2O = L-glutaminyl-tRNA(Gln) + L-glutamate + ADP + phosphate + H(+). Its function is as follows. Allows the formation of correctly charged Gln-tRNA(Gln) through the transamidation of misacylated Glu-tRNA(Gln) in organisms which lack glutaminyl-tRNA synthetase. The reaction takes place in the presence of glutamine and ATP through an activated gamma-phospho-Glu-tRNA(Gln). The protein is Glutamyl-tRNA(Gln) amidotransferase subunit A of Acinetobacter baumannii (strain AB0057).